A 383-amino-acid chain; its full sequence is ATP phosphoribosyltransferase regulatory subunit (383 aa).

Belongs to the class-II aminoacyl-tRNA synthetase family. HisZ subfamily. Heteromultimer composed of HisG and HisZ subunits.

Its subcellular location is the cytoplasm. It participates in amino-acid biosynthesis; L-histidine biosynthesis; L-histidine from 5-phospho-alpha-D-ribose 1-diphosphate: step 1/9. Functionally, required for the first step of histidine biosynthesis. May allow the feedback regulation of ATP phosphoribosyltransferase activity by histidine. The protein is ATP phosphoribosyltransferase regulatory subunit of Lactiplantibacillus plantarum (strain ATCC BAA-793 / NCIMB 8826 / WCFS1) (Lactobacillus plantarum).